A 141-amino-acid chain; its full sequence is Large ribosomal subunit protein uL11 (141 aa).

Belongs to the universal ribosomal protein uL11 family. Part of the ribosomal stalk of the 50S ribosomal subunit. Interacts with L10 and the large rRNA to form the base of the stalk. L10 forms an elongated spine to which L12 dimers bind in a sequential fashion forming a multimeric L10(L12)X complex. Post-translationally, one or more lysine residues are methylated.

Functionally, forms part of the ribosomal stalk which helps the ribosome interact with GTP-bound translation factors. This Synechocystis sp. (strain ATCC 27184 / PCC 6803 / Kazusa) protein is Large ribosomal subunit protein uL11.